Here is a 134-residue protein sequence, read N- to C-terminus: Profilin-5 (134 aa).

The protein belongs to the profilin family. In terms of assembly, occurs in many kinds of cells as a complex with monomeric actin in a 1:1 ratio. In terms of tissue distribution, specifically expressed in mature pollen grains. Expressed in germinating pollen grains. Expressed in growing pollen tubes (at protein level).

Its subcellular location is the cytoplasm. It is found in the cytoskeleton. Binds to actin monomers and regulates the organization of the actin cytoskeleton. At high concentrations, profilin prevents the polymerization of actin, whereas it enhances it at low concentrations. At low concentrations, associates with the poly-proline motif of formins to enhance actin filament elongation rate. Acts redundantly with PRF4 to regulate apical actin polymerization at the tip of pollen tube and control polarized pollen tube growth. Functions probably by favoring formin-mediated actin polymerization at pollen tube tips. The polypeptide is Profilin-5 (Arabidopsis thaliana (Mouse-ear cress)).